Here is a 495-residue protein sequence, read N- to C-terminus: Putative BTB/POZ domain-containing protein L98 (495 aa).

Residues Ser15 to Tyr85 form the BTB domain.

It belongs to the mimivirus BTB/WD family.

In Acanthamoeba polyphaga (Amoeba), this protein is Putative BTB/POZ domain-containing protein L98.